Consider the following 429-residue polypeptide: Histidine--tRNA ligase (429 aa).

Belongs to the class-II aminoacyl-tRNA synthetase family. In terms of assembly, homodimer.

It is found in the cytoplasm. It catalyses the reaction tRNA(His) + L-histidine + ATP = L-histidyl-tRNA(His) + AMP + diphosphate + H(+). In Prochlorococcus marinus subsp. pastoris (strain CCMP1986 / NIES-2087 / MED4), this protein is Histidine--tRNA ligase.